The following is a 457-amino-acid chain: ATP-dependent protease ATPase subunit HslU (457 aa).

Residues Ile-18 and 60–65 (GVGKTE) each bind ATP. The segment at 142 to 171 (KQPGMGFFNPAAPEEQEEQPSADQSSTREK) is disordered. The ATP site is built by Asp-269, Glu-335, and Arg-407.

This sequence belongs to the ClpX chaperone family. HslU subfamily. A double ring-shaped homohexamer of HslV is capped on each side by a ring-shaped HslU homohexamer. The assembly of the HslU/HslV complex is dependent on binding of ATP.

The protein localises to the cytoplasm. Its function is as follows. ATPase subunit of a proteasome-like degradation complex; this subunit has chaperone activity. The binding of ATP and its subsequent hydrolysis by HslU are essential for unfolding of protein substrates subsequently hydrolyzed by HslV. HslU recognizes the N-terminal part of its protein substrates and unfolds these before they are guided to HslV for hydrolysis. The polypeptide is ATP-dependent protease ATPase subunit HslU (Maridesulfovibrio salexigens (strain ATCC 14822 / DSM 2638 / NCIMB 8403 / VKM B-1763) (Desulfovibrio salexigens)).